Reading from the N-terminus, the 66-residue chain is Beta-mammal toxin Co2 (66 aa).

One can recognise an LCN-type CS-alpha/beta domain in the interval 1 to 66; that stretch reads KEGYIVNYHD…VWPLPKKRCN (66 aa). 4 cysteine pairs are disulfide-bonded: Cys12-Cys65, Cys16-Cys41, Cys25-Cys46, and Cys29-Cys48.

As to expression, expressed by the venom gland.

The protein localises to the secreted. Functionally, beta toxins bind voltage-independently at site-4 of sodium channels (Nav) and shift the voltage of activation toward more negative potentials thereby affecting sodium channel activation and promoting spontaneous and repetitive firing. This toxin acts on human Nav1.1/SCN1A, Nav1.2/SCN2A, Nav1.4/SCN4A and Nav1.6/SCN8A voltage-gated sodium channels. Also, it reduces the peak of sodium currents in Nav1.5/SCN5A at all potentials. In vivo, is lethal to mice when intraperitoneally injected at a dose of 5ug. No activity is observed when injected into crickets or woodlice. This Centruroides ornatus (Scorpion) protein is Beta-mammal toxin Co2.